The primary structure comprises 111 residues: MRVDEFIPDSMKSILTKNTSNTNVINENQTSGDANGTNSVDFGNILNEKLQEVNDKQIDADNTTNAFIQGDDVDVHKVMLSTEEAKLSLELAVQMRNKLVDAYQELNRTQL.

The protein belongs to the FliE family.

The protein resides in the bacterial flagellum basal body. The sequence is that of Flagellar hook-basal body complex protein FliE from Clostridium acetobutylicum (strain ATCC 824 / DSM 792 / JCM 1419 / IAM 19013 / LMG 5710 / NBRC 13948 / NRRL B-527 / VKM B-1787 / 2291 / W).